Here is a 616-residue protein sequence, read N- to C-terminus: Vitamin B12 transporter BtuB (616 aa).

The first 20 residues, 1–20 (MIKKISLLTALSVTAFSGWA), serve as a signal peptide directing secretion. A TonB box motif is present at residues 26–33 (DSLVVTAN). Residues 38-152 (PVNTVLAPTS…IGGVVNIITT (115 aa)) enclose the TBDR plug domain. Cyanocob(III)alamin-binding positions include Leu83, Ser85, Asn92, and 110–111 (VT). One can recognise a TBDR beta-barrel domain in the interval 155-616 (KDGTTLNAGI…EYTLSGSYTF (462 aa)). The next 3 beta stranded transmembrane spans lie at 158–165 (TTLNAGIG), 169–178 (YQNYGGSTQQ), and 184–195 (TRVTLAGDYTYT). Residues Asp199, Gln211, Asp213, and Asp215 each contribute to the Ca(2+) site. Beta stranded transmembrane passes span 217-227 (FMNKTLYGALE) and 232-248 (DQWTGFVRGYGYSNRTA). Residues Tyr249, Asp250, and Asp263 each contribute to the Ca(2+) site. The next 17 membrane-spanning stretches (beta stranded) occupy residues 265-279 (RQLYSQTWDAGLRFN), 281-298 (DLFHSQLLSSYSHSKDYN), 311-327 (TLDEIKQYNVQWTNAVD), 330-339 (HGNIGAGVDW), 355-371 (YDLRNTGVYLTALQKFG), 373-383 (VTLEGAVRSDD), 387-402 (FGRHGTWQSSAAWEFI), 405-419 (YRFIASYGTAYKAPN), 436-445 (ESKQWEGAFE), 451-460 (VNWRVSAYRN), 475-492 (YYNVGKARIKGVEATASF), 496-511 (PLTHTLGYDYVDARNA), 519-531 (RRAKQQVKYQLDT), 537-552 (DWSLTYHYLGTRYDTD), 560-574 (NVKLGGVSLWDVAVS), 587-598 (IANLFDKDYETA), and 604-616 (AGREYTLSGSYTF). Thr311 contacts cyanocob(III)alamin. Arg519 is a binding site for cyanocob(III)alamin. The short motif at 599–616 (YGYATAGREYTLSGSYTF) is the TonB C-terminal box element.

The protein belongs to the TonB-dependent receptor family. BtuB (TC 1.B.14.3.1) subfamily.

The protein resides in the cell outer membrane. Involved in the active translocation of vitamin B12 (cyanocobalamin) across the outer membrane to the periplasmic space. It derives its energy for transport by interacting with the trans-periplasmic membrane protein TonB. The polypeptide is Vitamin B12 transporter BtuB (Cronobacter sakazakii (strain ATCC BAA-894) (Enterobacter sakazakii)).